Consider the following 381-residue polypeptide: Deoxyguanosinetriphosphate triphosphohydrolase-like protein (381 aa).

In terms of domain architecture, HD spans 76 to 203 (RMTHTLEVAG…ADLSDEIAYT (128 aa)).

Belongs to the dGTPase family. Type 2 subfamily.

This chain is Deoxyguanosinetriphosphate triphosphohydrolase-like protein, found in Leptospira interrogans serogroup Icterohaemorrhagiae serovar copenhageni (strain Fiocruz L1-130).